Consider the following 318-residue polypeptide: NADH-ubiquinone oxidoreductase chain 1 (318 aa).

Transmembrane regions (helical) follow at residues 2–22 (PVIN…FLML), 69–89 (ILYI…WTPL), 100–120 (LGLL…LWSG), 146–166 (LALI…STLI), 171–191 (HSWL…STLA), 222–242 (LFFM…AMIF), 253–273 (ELHT…FLWI), and 294–314 (LPLT…TSGI).

This sequence belongs to the complex I subunit 1 family. As to quaternary structure, core subunit of respiratory chain NADH dehydrogenase (Complex I) which is composed of 45 different subunits.

The protein localises to the mitochondrion inner membrane. It catalyses the reaction a ubiquinone + NADH + 5 H(+)(in) = a ubiquinol + NAD(+) + 4 H(+)(out). Core subunit of the mitochondrial membrane respiratory chain NADH dehydrogenase (Complex I) which catalyzes electron transfer from NADH through the respiratory chain, using ubiquinone as an electron acceptor. Essential for the catalytic activity and assembly of complex I. This Pongo pygmaeus (Bornean orangutan) protein is NADH-ubiquinone oxidoreductase chain 1 (MT-ND1).